The primary structure comprises 448 residues: tRNA-2-methylthio-N(6)-dimethylallyladenosine synthase (448 aa).

Residues 2–120 (KKYRIIVFGC…LPELIGKVIE (119 aa)) form the MTTase N-terminal domain. Residues Cys-11, Cys-47, Cys-81, Cys-158, Cys-162, and Cys-165 each contribute to the [4Fe-4S] cluster site. A Radical SAM core domain is found at 144 to 374 (RKEGVRAWVT…IKLQNKISLE (231 aa)). The TRAM domain maps to 377-440 (EEEVGQTQEV…LAHLTGILSY (64 aa)).

It belongs to the methylthiotransferase family. MiaB subfamily. Monomer. [4Fe-4S] cluster serves as cofactor.

The protein localises to the cytoplasm. The enzyme catalyses N(6)-dimethylallyladenosine(37) in tRNA + (sulfur carrier)-SH + AH2 + 2 S-adenosyl-L-methionine = 2-methylsulfanyl-N(6)-dimethylallyladenosine(37) in tRNA + (sulfur carrier)-H + 5'-deoxyadenosine + L-methionine + A + S-adenosyl-L-homocysteine + 2 H(+). Its function is as follows. Catalyzes the methylthiolation of N6-(dimethylallyl)adenosine (i(6)A), leading to the formation of 2-methylthio-N6-(dimethylallyl)adenosine (ms(2)i(6)A) at position 37 in tRNAs that read codons beginning with uridine. The protein is tRNA-2-methylthio-N(6)-dimethylallyladenosine synthase of Pelotomaculum thermopropionicum (strain DSM 13744 / JCM 10971 / SI).